The sequence spans 131 residues: Probable lactoylglutathione lyase (131 aa).

The VOC domain occupies 2–126 (FLLHTMIRVG…DGYKIELIQT (125 aa)). A Ni(2+)-binding site is contributed by His-5. Substrate is bound at residue Arg-9. Residue Glu-56 participates in Ni(2+) binding. 2 residues coordinate substrate: Asn-60 and His-74. Ni(2+) contacts are provided by His-74 and Glu-122. The active-site Proton donor/acceptor is the Glu-122.

It belongs to the glyoxalase I family. It depends on Ni(2+) as a cofactor.

The enzyme catalyses (R)-S-lactoylglutathione = methylglyoxal + glutathione. The protein operates within secondary metabolite metabolism; methylglyoxal degradation; (R)-lactate from methylglyoxal: step 1/2. Its function is as follows. Catalyzes the conversion of hemimercaptal, formed from methylglyoxal and glutathione, to S-lactoylglutathione. This Synechocystis sp. (strain ATCC 27184 / PCC 6803 / Kazusa) protein is Probable lactoylglutathione lyase (gloA).